We begin with the raw amino-acid sequence, 63 residues long: Large ribosomal subunit protein bL35 (63 aa).

Composition is skewed to basic residues over residues 1–25 (MPKMKSKSSAAKRFKKTANGFKHRQ) and 32–47 (LTKKSTKRKRHLRPKK). Positions 1 to 55 (MPKMKSKSSAAKRFKKTANGFKHRQSFTSHILTKKSTKRKRHLRPKKQVNPSDVP) are disordered.

It belongs to the bacterial ribosomal protein bL35 family.

In Hahella chejuensis (strain KCTC 2396), this protein is Large ribosomal subunit protein bL35.